A 356-amino-acid chain; its full sequence is Golgi-resident adenosine 3',5'-bisphosphate 3'-phosphatase (356 aa).

Position 1 is an N-acetylmethionine (Met-1). Topologically, residues 1–12 (MAPMGIRLSPLG) are cytoplasmic. A helical membrane pass occupies residues 13-33 (VAVFFLLGLGVLYHLYSGFLA). The Lumenal portion of the chain corresponds to 34–356 (GRFSLFGLGS…KLPDLEKSGH (323 aa)). A disordered region spans residues 84–104 (ESNVLHEKSKGKTREGADDKM). Asp-108 (proton acceptor) is an active-site residue. Mg(2+)-binding residues include Glu-131, Asp-172, Leu-174, and Asp-175. Catalysis depends on Thr-177, which acts as the Proton acceptor. The AMP site is built by Ser-240 and His-243. N-linked (GlcNAc...) asparagine glycosylation occurs at Asn-257. AMP is bound by residues Gly-266 and Lys-270. Mg(2+) is bound at residue Asp-298.

It belongs to the inositol monophosphatase superfamily. Mg(2+) is required as a cofactor. In terms of processing, N-glycosylated. Contains N-linked glycan resistant to endoglycosydase H.

It localises to the golgi apparatus. It is found in the trans-Golgi network membrane. The catalysed reaction is adenosine 3',5'-bisphosphate + H2O = AMP + phosphate. It participates in sulfur metabolism. Its activity is regulated as follows. Strongly inhibited by lithium. Functionally, exhibits 3'-nucleotidase activity toward adenosine 3',5'-bisphosphate (PAP), namely hydrolyzes adenosine 3',5'-bisphosphate into adenosine 5'-monophosphate (AMP) and a phosphate. May play a role in the formation of skeletal elements derived through endochondral ossification, possibly by clearing adenosine 3',5'-bisphosphate produced by Golgi sulfotransferases during glycosaminoglycan sulfation. Has no activity toward 3'-phosphoadenosine 5'-phosphosulfate (PAPS) or inositol phosphate (IP) substrates including I(1)P, I(1,4)P2, I(1,3,4)P3, I(1,4,5)P3 and I(1,3,4,5)P4. The polypeptide is Golgi-resident adenosine 3',5'-bisphosphate 3'-phosphatase (Mus musculus (Mouse)).